We begin with the raw amino-acid sequence, 351 residues long: Protein-glutamate methylesterase/protein-glutamine glutaminase (351 aa).

The 118-residue stretch at 6 to 123 (RVLVVDDSPT…ARPFGDLADK (118 aa)) folds into the Response regulatory domain. 4-aspartylphosphate is present on Asp-57. Residues 154 to 346 (YRAGRKVVAI…EEILKLTTAR (193 aa)) form the CheB-type methylesterase domain. Catalysis depends on residues Ser-166, His-192, and Asp-288.

The protein belongs to the CheB family. Post-translationally, phosphorylated by CheA. Phosphorylation of the N-terminal regulatory domain activates the methylesterase activity.

It is found in the cytoplasm. It carries out the reaction [protein]-L-glutamate 5-O-methyl ester + H2O = L-glutamyl-[protein] + methanol + H(+). The enzyme catalyses L-glutaminyl-[protein] + H2O = L-glutamyl-[protein] + NH4(+). Its function is as follows. Involved in chemotaxis. Part of a chemotaxis signal transduction system that modulates chemotaxis in response to various stimuli. Catalyzes the demethylation of specific methylglutamate residues introduced into the chemoreceptors (methyl-accepting chemotaxis proteins or MCP) by CheR. Also mediates the irreversible deamidation of specific glutamine residues to glutamic acid. In Agrobacterium fabrum (strain C58 / ATCC 33970) (Agrobacterium tumefaciens (strain C58)), this protein is Protein-glutamate methylesterase/protein-glutamine glutaminase.